The following is a 124-amino-acid chain: Small ribosomal subunit protein uS12 (124 aa).

Residues 1–25 (MATINQLVRKPRQASTYKSASPALD) are disordered.

This sequence belongs to the universal ribosomal protein uS12 family. In terms of assembly, part of the 30S ribosomal subunit. Contacts proteins S8 and S17. May interact with IF1 in the 30S initiation complex.

Its function is as follows. With S4 and S5 plays an important role in translational accuracy. Functionally, interacts with and stabilizes bases of the 16S rRNA that are involved in tRNA selection in the A site and with the mRNA backbone. Located at the interface of the 30S and 50S subunits, it traverses the body of the 30S subunit contacting proteins on the other side and probably holding the rRNA structure together. The combined cluster of proteins S8, S12 and S17 appears to hold together the shoulder and platform of the 30S subunit. This chain is Small ribosomal subunit protein uS12, found in Xylella fastidiosa (strain 9a5c).